The following is a 295-amino-acid chain: Bifunctional protein FolD (295 aa).

Residues G166–S168, S195, and I236 contribute to the NADP(+) site.

Belongs to the tetrahydrofolate dehydrogenase/cyclohydrolase family. As to quaternary structure, homodimer.

It catalyses the reaction (6R)-5,10-methylene-5,6,7,8-tetrahydrofolate + NADP(+) = (6R)-5,10-methenyltetrahydrofolate + NADPH. It carries out the reaction (6R)-5,10-methenyltetrahydrofolate + H2O = (6R)-10-formyltetrahydrofolate + H(+). It functions in the pathway one-carbon metabolism; tetrahydrofolate interconversion. Its function is as follows. Catalyzes the oxidation of 5,10-methylenetetrahydrofolate to 5,10-methenyltetrahydrofolate and then the hydrolysis of 5,10-methenyltetrahydrofolate to 10-formyltetrahydrofolate. The protein is Bifunctional protein FolD of Chlorobium phaeobacteroides (strain DSM 266 / SMG 266 / 2430).